Reading from the N-terminus, the 400-residue chain is Protein transport protein HofC homolog (400 aa).

Helical transmembrane passes span 165–185 (YPII…HFVL), 209–229 (LADF…LLAI), and 370–390 (LLII…LPIF).

This sequence belongs to the GSP F family.

Its subcellular location is the cell inner membrane. The polypeptide is Protein transport protein HofC homolog (hofC) (Escherichia coli (strain K12)).